Here is a 539-residue protein sequence, read N- to C-terminus: Hydroxylamine reductase (539 aa).

Residues Cys3, Cys6, Cys14, and Cys20 each contribute to the [4Fe-4S] cluster site. Residues His232, Glu256, Cys300, Cys392, Cys420, Cys445, Glu480, and Lys482 each coordinate hybrid [4Fe-2O-2S] cluster. At Cys392 the chain carries Cysteine persulfide.

The protein belongs to the HCP family. [4Fe-4S] cluster is required as a cofactor. It depends on hybrid [4Fe-2O-2S] cluster as a cofactor.

The protein resides in the cytoplasm. The catalysed reaction is A + NH4(+) + H2O = hydroxylamine + AH2 + H(+). Catalyzes the reduction of hydroxylamine to form NH(3) and H(2)O. The sequence is that of Hydroxylamine reductase from Chlorobaculum tepidum (strain ATCC 49652 / DSM 12025 / NBRC 103806 / TLS) (Chlorobium tepidum).